Reading from the N-terminus, the 1226-residue chain is Cytosolic carboxypeptidase 1 (1226 aa).

Residues 599–619 form a disordered region; it reads TEDDEDTESNSSVEQASVEVP. In terms of domain architecture, Peptidase M14 spans 848 to 1138; it reads YPYTYSTLQM…KFCVGLLRLK (291 aa). Zn(2+) is bound by residues His920, Glu923, and His1017. The Proton donor/acceptor role is filled by Glu1102. Position 1168 is a phosphoserine (Ser1168). The segment at 1206–1226 is disordered; it reads YEPSAQEEVLSDSELSRTYLP.

It belongs to the peptidase M14 family. As to quaternary structure, interacts with MYLK. The cofactor is Zn(2+).

The protein localises to the cytoplasm. The protein resides in the cytosol. Its subcellular location is the nucleus. It is found in the mitochondrion. The enzyme catalyses (L-glutamyl)(n+1)-gamma-L-glutamyl-L-glutamyl-[protein] + H2O = (L-glutamyl)(n)-gamma-L-glutamyl-L-glutamyl-[protein] + L-glutamate. It catalyses the reaction C-terminal L-alpha-aminoacyl-L-glutamyl-L-glutamyl-[tubulin] + H2O = C-terminal L-alpha-aminoacyl-L-glutamyl-[tubulin] + L-glutamate. Functionally, metallocarboxypeptidase that mediates protein deglutamylation of tubulin and non-tubulin target proteins. Catalyzes the removal of polyglutamate side chains present on the gamma-carboxyl group of glutamate residues within the C-terminal tail of alpha- and beta-tubulin. Specifically cleaves tubulin long-side-chains, while it is not able to remove the branching point glutamate. Also catalyzes the removal of polyglutamate residues from the carboxy-terminus of alpha-tubulin as well as non-tubulin proteins such as MYLK. Involved in KLF4 deglutamylation which promotes KLF4 proteasome-mediated degradation, thereby negatively regulating cell pluripotency maintenance and embryogenesis. This Homo sapiens (Human) protein is Cytosolic carboxypeptidase 1.